A 291-amino-acid chain; its full sequence is Beta-lactamase CTX-M-25 (291 aa).

The first 30 residues, M1–A30, serve as a signal peptide directing secretion. The active-site Nucleophile; acyl-ester intermediate is the S73. A beta-lactam is bound by residues K76, S133, E169, and S240.

Belongs to the class-A beta-lactamase family. As to quaternary structure, monomer.

The protein resides in the secreted. The catalysed reaction is a beta-lactam + H2O = a substituted beta-amino acid. Inhibited by the beta-lactamase-blocking agents clavulanic acid and tazobactam; in the DH10B strain. Extended-spectrum beta-lactamase (ESBL) which confers resistance to penicillins, as well as first, second and third-generation cephalosporins. Has cefotaxime-hydrolyzing activity. Inactive against cephalosporin antibiotic, cefoxitin, and the carbapenem, imipenem. The sequence is that of Beta-lactamase CTX-M-25 from Escherichia coli.